The sequence spans 197 residues: CASP-like protein 1B1 (197 aa).

Ala2 carries the N-acetylalanine modification. Topologically, residues Ala2–Lys17 are cytoplasmic. The chain crosses the membrane as a helical span at residues Ile18–Gly38. Topologically, residues Leu39–Ala69 are extracellular. Residues Phe70–Leu90 form a helical membrane-spanning segment. Topologically, residues Gln91 to Ser106 are cytoplasmic. Residues Val107–Phe127 traverse the membrane as a helical segment. The Extracellular segment spans residues Met128–Ala156. Residues Gly157–Ile177 form a helical membrane-spanning segment. At Ser178–Pro197 the chain is on the cytoplasmic side.

The protein belongs to the Casparian strip membrane proteins (CASP) family. Homodimer and heterodimers.

The protein localises to the cell membrane. The sequence is that of CASP-like protein 1B1 from Arabidopsis thaliana (Mouse-ear cress).